We begin with the raw amino-acid sequence, 219 residues long: Ribose-5-phosphate isomerase A (219 aa).

Substrate contacts are provided by residues 28–31 (TGST), 81–84 (DGAD), and 94–97 (KGGG). Glu-103 functions as the Proton acceptor in the catalytic mechanism. Residue Lys-121 coordinates substrate.

The protein belongs to the ribose 5-phosphate isomerase family. As to quaternary structure, homodimer.

It carries out the reaction aldehydo-D-ribose 5-phosphate = D-ribulose 5-phosphate. Its pathway is carbohydrate degradation; pentose phosphate pathway; D-ribose 5-phosphate from D-ribulose 5-phosphate (non-oxidative stage): step 1/1. Functionally, catalyzes the reversible conversion of ribose-5-phosphate to ribulose 5-phosphate. The polypeptide is Ribose-5-phosphate isomerase A (Salmonella choleraesuis (strain SC-B67)).